The sequence spans 88 residues: Phosphocarrier protein HPr (88 aa).

The HPr domain occupies 1–88; that stretch reads MEQKSYVIID…DILSKEGLTK (88 aa). Catalysis depends on H15, which acts as the Pros-phosphohistidine intermediate. A Phosphoserine; by HPrK/P modification is found at S46.

This sequence belongs to the HPr family.

It localises to the cytoplasm. Phosphorylation on Ser-46 inhibits the phosphoryl transfer from enzyme I to HPr. Functionally, general (non sugar-specific) component of the phosphoenolpyruvate-dependent sugar phosphotransferase system (sugar PTS). This major carbohydrate active-transport system catalyzes the phosphorylation of incoming sugar substrates concomitantly with their translocation across the cell membrane. The phosphoryl group from phosphoenolpyruvate (PEP) is transferred to the phosphoryl carrier protein HPr by enzyme I. Phospho-HPr then transfers it to the PTS EIIA domain. The polypeptide is Phosphocarrier protein HPr (ptsH) (Staphylococcus xylosus).